We begin with the raw amino-acid sequence, 310 residues long: tRNA dimethylallyltransferase (310 aa).

ATP is bound at residue 13-20 (GPTASGKT). 15-20 (TASGKT) is a binding site for substrate. 4 interaction with substrate tRNA regions span residues 38–41 (DSAL), 162–166 (QRLSR), 243–248 (RCVGYR), and 276–283 (KRQITWLR).

The protein belongs to the IPP transferase family. In terms of assembly, monomer. Mg(2+) serves as cofactor.

It carries out the reaction adenosine(37) in tRNA + dimethylallyl diphosphate = N(6)-dimethylallyladenosine(37) in tRNA + diphosphate. Functionally, catalyzes the transfer of a dimethylallyl group onto the adenine at position 37 in tRNAs that read codons beginning with uridine, leading to the formation of N6-(dimethylallyl)adenosine (i(6)A). This chain is tRNA dimethylallyltransferase, found in Aliivibrio fischeri (strain MJ11) (Vibrio fischeri).